The following is a 329-amino-acid chain: Quinone-oxidoreductase homolog, chloroplastic (329 aa).

This sequence belongs to the zinc-containing alcohol dehydrogenase family. Quinone oxidoreductase subfamily. The transit peptide is not cleaved.

It is found in the plastid. Its subcellular location is the chloroplast inner membrane. This is Quinone-oxidoreductase homolog, chloroplastic (QOR) from Spinacia oleracea (Spinach).